Reading from the N-terminus, the 201-residue chain is Holliday junction branch migration complex subunit RuvA (201 aa).

The domain I stretch occupies residues 1-64; the sequence is MIGRLHGKII…EDAHLLFGFA (64 aa). Residues 65–143 form a domain II region; that stretch reads QKQDRTLFRE…GVAQSDFFEE (79 aa). Residues 144–154 are flexible linker; that stretch reads HSVETIVATHS. The segment at 154–201 is domain III; the sequence is SHDPADEARDALVALGYKLADAEKMIKKVNKAGATSEQLIREALKASL.

The protein belongs to the RuvA family. Homotetramer. Forms an RuvA(8)-RuvB(12)-Holliday junction (HJ) complex. HJ DNA is sandwiched between 2 RuvA tetramers; dsDNA enters through RuvA and exits via RuvB. An RuvB hexamer assembles on each DNA strand where it exits the tetramer. Each RuvB hexamer is contacted by two RuvA subunits (via domain III) on 2 adjacent RuvB subunits; this complex drives branch migration. In the full resolvosome a probable DNA-RuvA(4)-RuvB(12)-RuvC(2) complex forms which resolves the HJ.

It is found in the cytoplasm. The RuvA-RuvB-RuvC complex processes Holliday junction (HJ) DNA during genetic recombination and DNA repair, while the RuvA-RuvB complex plays an important role in the rescue of blocked DNA replication forks via replication fork reversal (RFR). RuvA specifically binds to HJ cruciform DNA, conferring on it an open structure. The RuvB hexamer acts as an ATP-dependent pump, pulling dsDNA into and through the RuvAB complex. HJ branch migration allows RuvC to scan DNA until it finds its consensus sequence, where it cleaves and resolves the cruciform DNA. The chain is Holliday junction branch migration complex subunit RuvA from Actinobacillus pleuropneumoniae serotype 5b (strain L20).